The primary structure comprises 393 residues: S-adenosylmethionine synthase (393 aa).

Glu-9 contacts Mg(2+). Position 15 (His-15) interacts with ATP. Glu-43 contributes to the K(+) binding site. 2 residues coordinate L-methionine: Glu-56 and Gln-99. Residues 167–169 (DGK), 235–238 (SGRF), Asp-246, 252–253 (RK), Ala-269, Lys-273, and Lys-277 contribute to the ATP site. Asp-246 serves as a coordination point for L-methionine. Lys-277 is a binding site for L-methionine.

It belongs to the AdoMet synthase family. In terms of assembly, homotetramer. Requires Mn(2+) as cofactor. It depends on Mg(2+) as a cofactor. The cofactor is Co(2+). K(+) is required as a cofactor.

It localises to the cytoplasm. The catalysed reaction is L-methionine + ATP + H2O = S-adenosyl-L-methionine + phosphate + diphosphate. It functions in the pathway amino-acid biosynthesis; S-adenosyl-L-methionine biosynthesis; S-adenosyl-L-methionine from L-methionine: step 1/1. Functionally, catalyzes the formation of S-adenosylmethionine from methionine and ATP. The reaction comprises two steps that are both catalyzed by the same enzyme: formation of S-adenosylmethionine (AdoMet) and triphosphate, and subsequent hydrolysis of the triphosphate. The protein is S-adenosylmethionine synthase (SAMS) of Gossypium hirsutum (Upland cotton).